The following is a 381-amino-acid chain: Ubiquitin-associated protein 1-like (381 aa).

One can recognise a UMA domain in the interval 4–50 (LDGVPFKLPKGFVIGTEPLPGPELSVPACGEVLLGSMHDFSLERTAL). 2 disordered regions span residues 87–141 (LAPA…PGRR) and 185–228 (SLCP…LRSH). The segment covering 95–104 (RDPEAGHQER) has biased composition (basic and acidic residues). Positions 105–123 (PEEEGEDEAEASSGSEEEP) are enriched in acidic residues. Over residues 124 to 141 (APSSLQPGSPASPGPGRR) the composition is skewed to low complexity. The segment covering 197-216 (ASPPGPAPQHPAAPASPPRP) has biased composition (pro residues).

The sequence is that of Ubiquitin-associated protein 1-like (UBAP1L) from Homo sapiens (Human).